Reading from the N-terminus, the 220-residue chain is 2-hydroxy-3-keto-5-methylthiopentenyl-1-phosphate phosphatase (220 aa).

It belongs to the HAD-like hydrolase superfamily. MtnX family.

The catalysed reaction is 2-hydroxy-5-methylsulfanyl-3-oxopent-1-enyl phosphate + H2O = 1,2-dihydroxy-5-(methylsulfanyl)pent-1-en-3-one + phosphate. It participates in amino-acid biosynthesis; L-methionine biosynthesis via salvage pathway; L-methionine from S-methyl-5-thio-alpha-D-ribose 1-phosphate: step 4/6. In terms of biological role, dephosphorylates 2-hydroxy-3-keto-5-methylthiopentenyl-1-phosphate (HK-MTPenyl-1-P) yielding 1,2-dihydroxy-3-keto-5-methylthiopentene (DHK-MTPene). This Geobacillus kaustophilus (strain HTA426) protein is 2-hydroxy-3-keto-5-methylthiopentenyl-1-phosphate phosphatase.